Consider the following 1940-residue polypeptide: Rho GTPase-activating protein 32 (1940 aa).

In terms of domain architecture, PX; atypical spans 154-248; sequence SKELVFLVQI…LTWMEIDNKG (95 aa). The SH3 domain maps to 262–324; it reads PAIAAAHVIK…PSECVELIND (63 aa). One can recognise a Rho-GAP domain in the interval 375–570; the sequence is CDLGEHLLNS…FILNHVEVLF (196 aa). 5 disordered regions span residues 646-746, 1035-1163, 1219-1264, 1430-1454, and 1675-1786; these read FPSE…LSAS, RANQ…FSVT, FTTG…PPVR, KHPRSRNKPDYMPSMSPGVRSYTED, and RSRS…HSSA. The segment covering 1047-1061 has biased composition (polar residues); sequence PQGASASESPQELSH. Composition is skewed to low complexity over residues 1081–1094 and 1145–1163; these read LALALAESAQQASA and SRKTSPATPPSTTSSFSVT. The segment covering 1691 to 1707 has biased composition (basic and acidic residues); sequence ETKDVRYPGRTEGDERT. Positions 1725–1734 are enriched in polar residues; the sequence is PQKQSGSSRS. Residues 1736-1755 are compositionally biased toward basic and acidic residues; it reads MQHDISTEQHSQDTLHRQPS.

The protein belongs to the PX domain-containing GAP family.

It is found in the cytoplasm. It localises to the membrane. The protein resides in the cell membrane. In terms of biological role, GTPase-activating protein (GAP) promoting GTP hydrolysis on RHOA, CDC42 and RAC1 small GTPases. In Xenopus laevis (African clawed frog), this protein is Rho GTPase-activating protein 32 (arhgap32).